Reading from the N-terminus, the 383-residue chain is MQGKPRIAVIGAGLGGTAGAALMARAGFNVRLYEQAPAFSRLGAGIHLGPNVMKIMRRIGIEDELNRQGSHPDYWYSRDWQSGAELARIPLGDYAVSHYGATYLTVHRGDFHALMTAALPAGLLQFNKRLTRVDEDDDVVRLHFADGSVEEAEIVIGADGVNSRLREHLLGAELPKYTGYVAHRAVFPTPLDSGSLPFDMCVKWWSDDRHMMVYFVTGKRDEIYYVTGVPEQQWDMGKSWVPSSKAEMRAAFAGWHPTVQALIEATPEVSKWPLLERDPLPLWSRGRIVLLGDACHPMKPHMAQGAAMAIEDAAMLTRIFEQTGLQDHAAAFRLYEDNRAERASRVQRVSHDNTWLRTNENPDWCFGYDVYAEPLVEGRRAAA.

The first 26 residues, 1 to 26 (MQGKPRIAVIGAGLGGTAGAALMARA), serve as a signal peptide directing secretion. Residues glycine 15, 34–35 (EQ), histidine 47, arginine 108, and leucine 130 contribute to the FAD site. The active-site Proton acceptor is the histidine 47. Tyrosine 214 serves as the catalytic Proton acceptor. Residues aspartate 293 and 306–307 (AA) each bind FAD.

The protein belongs to the 6-hydroxynicotinate 3-monooxygenase family. As to quaternary structure, monomer. FAD serves as cofactor.

It catalyses the reaction 6-hydroxynicotinate + NADH + O2 + 2 H(+) = 2,5-dihydroxypyridine + CO2 + NAD(+) + H2O. The protein operates within cofactor degradation; nicotinate degradation. With respect to regulation, competitively inhibited by 6-hydroxynicotinaldehyde. In terms of biological role, flavin-dependent monooxygenase (FMO) that catalyzes the decarboxylative hydroxylation of 6-hydroxynicotinic acid (6-HNA) to 2,5-dihydroxypyridine (2,5-DHP) with concomitant oxidation of NADH, a step in the aerobic nicotinate degradation pathway. Is also active on the non-natural substrate 5-chloro-6-hydroxynicotinate, and is much less efficient on the substrate analog 4-hydroxybenzoate. This is 6-hydroxynicotinate 3-monooxygenase from Bordetella bronchiseptica (strain ATCC BAA-588 / NCTC 13252 / RB50) (Alcaligenes bronchisepticus).